The sequence spans 261 residues: MKEKMKEKLTVIKVGGKIVEEEATLNQLLNDFAAIEGHKVLVHGGGRSATKIAAQLGIDSKMVNGRRITDAETLKVVTMVYGGLVNKNIVAGLQARGVNALGLTGADMNVIRSMKRPVKEVDYGFVGDVERVDSTLLSDLIHKGVVPVMAPLTHDGQGNMLNTNADTIAGETAKALSAIFDVTLVYCFEKKGVLRDENDDESVIPQINHAEFQRYIAEGVIQGGMIPKLENSFEAINAGVSEVVITLASAIHTDGGTRIKK.

Residues 45–46, Arg-67, and Asn-162 each bind substrate; that span reads GG.

The protein belongs to the acetylglutamate kinase family. ArgB subfamily.

The protein localises to the cytoplasm. The enzyme catalyses N-acetyl-L-glutamate + ATP = N-acetyl-L-glutamyl 5-phosphate + ADP. It functions in the pathway amino-acid biosynthesis; L-arginine biosynthesis; N(2)-acetyl-L-ornithine from L-glutamate: step 2/4. Functionally, catalyzes the ATP-dependent phosphorylation of N-acetyl-L-glutamate. The sequence is that of Acetylglutamate kinase from Bacteroides fragilis (strain ATCC 25285 / DSM 2151 / CCUG 4856 / JCM 11019 / LMG 10263 / NCTC 9343 / Onslow / VPI 2553 / EN-2).